We begin with the raw amino-acid sequence, 524 residues long: Probable aminopeptidase NPEPL1 (524 aa).

The Zn(2+) site is built by K260 and D265. The active site involves K272. Residues D283, D342, and E344 each contribute to the Zn(2+) site. Residue R346 is part of the active site.

The protein belongs to the peptidase M17 family. It depends on Zn(2+) as a cofactor. Mn(2+) serves as cofactor.

Probably catalyzes the removal of unsubstituted N-terminal amino acids from various peptides. In Mus musculus (Mouse), this protein is Probable aminopeptidase NPEPL1 (Npepl1).